We begin with the raw amino-acid sequence, 139 residues long: Plastocyanin (139 aa).

Residues 1-34 form the signal peptide; sequence MKLIAQISRSLSLALFALVLMVGSFVAVMSPAAA. The Plastocyanin-like domain occupies 35 to 139; that stretch reads ETFTVKMGAD…GMVGKITVEG (105 aa). The Cu cation site is built by H73, C123, H126, and M131.

The protein belongs to the plastocyanin family. Requires Cu(2+) as cofactor.

It localises to the cellular thylakoid membrane. Its function is as follows. Participates in electron transfer between P700 and the cytochrome b6-f complex in photosystem I. The sequence is that of Plastocyanin (petE) from Leptolyngbya laminosa (Phormidium laminosum).